The following is a 356-amino-acid chain: Photosystem II protein D1 4 (356 aa).

The next 3 membrane-spanning stretches (helical) occupy residues tyrosine 32–threonine 49, histidine 121–leucine 136, and tryptophan 145–serine 159. Histidine 121 is a chlorophyll a binding site. Aspartate 173 and aspartate 192 together coordinate [CaMn4O5] cluster. The helical transmembrane segment at phenylalanine 200–leucine 221 threads the bilayer. Histidine 201 contributes to the chlorophyll a binding site. Histidine 218 is a binding site for a quinone. Fe cation-binding residues include histidine 218 and histidine 276. A helical transmembrane segment spans residues leucine 278 to methionine 292. Histidine 336 serves as a coordination point for [CaMn4O5] cluster.

The protein belongs to the reaction center PufL/M/PsbA/D family. As to quaternary structure, PSII is composed of 1 copy each of membrane proteins PsbA, PsbB, PsbC, PsbD, PsbE, PsbF, PsbH, PsbI, PsbJ, PsbK, PsbL, PsbM, PsbT, PsbX, PsbY, PsbZ, Psb30/Ycf12, peripheral proteins PsbO, CyanoQ (PsbQ), PsbU, PsbV and a large number of cofactors. It forms dimeric complexes. The D1/D2 heterodimer binds P680, chlorophylls that are the primary electron donor of PSII, and subsequent electron acceptors. It shares a non-heme iron and each subunit binds pheophytin, quinone, additional chlorophylls, carotenoids and lipids. D1 provides most of the ligands for the Mn4-Ca-O5 cluster of the oxygen-evolving complex (OEC). There is also a Cl(-1) ion associated with D1 and D2, which is required for oxygen evolution. The PSII complex binds additional chlorophylls, carotenoids and specific lipids. serves as cofactor. In terms of processing, tyr-164 forms a radical intermediate that is referred to as redox-active TyrZ, YZ or Y-Z.

It localises to the cellular thylakoid membrane. The enzyme catalyses 2 a plastoquinone + 4 hnu + 2 H2O = 2 a plastoquinol + O2. Functionally, photosystem II (PSII) is a light-driven water:plastoquinone oxidoreductase that uses light energy to abstract electrons from H(2)O, generating O(2) and a proton gradient subsequently used for ATP formation. It consists of a core antenna complex that captures photons, and an electron transfer chain that converts photonic excitation into a charge separation. The D1/D2 (PsbA/PsbD) reaction center heterodimer binds P680, the primary electron donor of PSII as well as several subsequent electron acceptors. The protein is Photosystem II protein D1 4 of Trichormus variabilis (strain ATCC 29413 / PCC 7937) (Anabaena variabilis).